The sequence spans 669 residues: DNA mismatch repair protein MutL (669 aa).

Disordered stretches follow at residues 354–402 and 448–479; these read NRPA…ENPY and TVSH…PLES. Polar residues predominate over residues 448 to 468; the sequence is TVSHDSPPNRTAPDATTSSSK.

The protein belongs to the DNA mismatch repair MutL/HexB family.

This protein is involved in the repair of mismatches in DNA. It is required for dam-dependent methyl-directed DNA mismatch repair. May act as a 'molecular matchmaker', a protein that promotes the formation of a stable complex between two or more DNA-binding proteins in an ATP-dependent manner without itself being part of a final effector complex. The protein is DNA mismatch repair protein MutL of Pectobacterium carotovorum subsp. carotovorum (strain PC1).